The following is a 301-amino-acid chain: Aquaporin NIP2-3 (301 aa).

2 helical membrane passes run 57-77 (VISE…AASI) and 91-111 (SVAG…ISGA). The NPA 1 signature appears at 114-116 (NPA). The next 3 helical transmembrane spans lie at 132 to 154 (VPFY…KAVL), 172 to 192 (ALAI…AVAT), and 200 to 220 (LAGL…GPVS). The NPA 2 motif lies at 225-227 (NPA). A helical membrane pass occupies residues 238-258 (VFTGLWIYFLGPVVGTLSGAW).

This sequence belongs to the MIP/aquaporin (TC 1.A.8) family. NIP (TC 1.A.8.12) subfamily.

Its subcellular location is the membrane. Its function is as follows. Aquaporins facilitate the transport of water and small neutral solutes across cell membranes. The polypeptide is Aquaporin NIP2-3 (NIP2-3) (Zea mays (Maize)).